Consider the following 292-residue polypeptide: Histamine N-methyltransferase (292 aa).

E28 provides a ligand contact to substrate. G60, E89, Q94, S120, and I142 together coordinate S-adenosyl-L-methionine. Residue N283 participates in substrate binding.

The protein belongs to the class I-like SAM-binding methyltransferase superfamily. HNMT family. As to quaternary structure, monomer. As to expression, expressed in jejunum, brain &gt; lung, spleen, stomach &gt; liver, kidney.

Its subcellular location is the cytoplasm. The enzyme catalyses histamine + S-adenosyl-L-methionine = N(tau)-methylhistamine + S-adenosyl-L-homocysteine + H(+). Functionally, inactivates histamine by N-methylation. Plays an important role in degrading histamine and in regulating the airway response to histamine. This chain is Histamine N-methyltransferase (HNMT), found in Cavia porcellus (Guinea pig).